A 417-amino-acid polypeptide reads, in one-letter code: Serine hydroxymethyltransferase (417 aa).

(6S)-5,6,7,8-tetrahydrofolate is bound by residues L120 and 124 to 126; that span reads GHL. K229 is subject to N6-(pyridoxal phosphate)lysine. 354–356 serves as a coordination point for (6S)-5,6,7,8-tetrahydrofolate; the sequence is SPF.

This sequence belongs to the SHMT family. As to quaternary structure, homodimer. The cofactor is pyridoxal 5'-phosphate.

It localises to the cytoplasm. It carries out the reaction (6R)-5,10-methylene-5,6,7,8-tetrahydrofolate + glycine + H2O = (6S)-5,6,7,8-tetrahydrofolate + L-serine. It participates in one-carbon metabolism; tetrahydrofolate interconversion. It functions in the pathway amino-acid biosynthesis; glycine biosynthesis; glycine from L-serine: step 1/1. Catalyzes the reversible interconversion of serine and glycine with tetrahydrofolate (THF) serving as the one-carbon carrier. This reaction serves as the major source of one-carbon groups required for the biosynthesis of purines, thymidylate, methionine, and other important biomolecules. Also exhibits THF-independent aldolase activity toward beta-hydroxyamino acids, producing glycine and aldehydes, via a retro-aldol mechanism. The chain is Serine hydroxymethyltransferase from Acinetobacter baylyi (strain ATCC 33305 / BD413 / ADP1).